Reading from the N-terminus, the 466-residue chain is Teichoic acids export ATP-binding protein TagH (466 aa).

Residues 27–249 enclose the ABC transporter domain; the sequence is NKAKSLIGSN…YEKFVQWFKK (223 aa). 63 to 70 is a binding site for ATP; that stretch reads GLNGAGKS. The segment at 250–466 is unknown; that stretch reads LPKKEQEKFK…TTEQSDGANQ (217 aa). 2 disordered regions span residues 356–403 and 439–466; these read NMTS…SNQN and IHPG…GANQ. Residues 373 to 384 are compositionally biased toward basic residues; it reads PKKKVSQAKKTT. A compositionally biased stretch (low complexity) spans 385–403; sequence KVSSTQKNTSSSSSTSNQN. Positions 403–447 constitute a LysM domain; sequence NTYIVQAGDSLSIIAENHGYSVEEIQQVNPGVDFSVIHPGQEINL. Polar residues predominate over residues 449–466; the sequence is EPTTSANSTTEQSDGANQ.

Belongs to the ABC transporter superfamily. Teichoic acids exporter (TC 3.A.1.104.1) family. As to quaternary structure, the complex is composed of two ATP-binding proteins (TagH) and two transmembrane proteins (TagG).

The protein resides in the cell membrane. It carries out the reaction ATP + H2O + teichoic acidSide 1 = ADP + phosphate + teichoic acidSide 2.. Functionally, part of the ABC transporter complex TagGH involved in teichoic acids export. Responsible for energy coupling to the transport system. This chain is Teichoic acids export ATP-binding protein TagH, found in Lactococcus lactis subsp. lactis (strain IL1403) (Streptococcus lactis).